We begin with the raw amino-acid sequence, 195 residues long: CASP-like protein 2C2 (195 aa).

The Cytoplasmic portion of the chain corresponds to 1 to 18; that stretch reads MAATTAAAAVPGVVRAER. A helical membrane pass occupies residues 19–39; it reads LLRGGCVVMAATAALLLGFSA. Residues 40–57 lie on the Extracellular side of the membrane; that stretch reads ETKTVLFVRKTAVAKDVQ. Residues 58 to 78 form a helical membrane-spanning segment; it reads ALWVLTVAAAAAAGYQFAQLV. Over 79 to 106 the chain is Cytoplasmic; it reads RCMYCSSSGDAGAMAVAWTSFLLDKGCA. The chain crosses the membrane as a helical span at residues 107–127; that stretch reads YVVFASTAAALQACMVGLIGV. The Extracellular segment spans residues 128–145; sequence EALQWSKLCNIYTRFCEQ. A helical transmembrane segment spans residues 146-166; it reads AAAGMLCSFLAAAGMAVLSAF. The Cytoplasmic segment spans residues 167–195; the sequence is SARRLFRLYSPAGHRRSCPRAAVLATSPH.

This sequence belongs to the Casparian strip membrane proteins (CASP) family. Homodimer and heterodimers.

The protein resides in the cell membrane. In Oryza sativa subsp. japonica (Rice), this protein is CASP-like protein 2C2.